A 66-amino-acid polypeptide reads, in one-letter code: Large ribosomal subunit protein bL33c (66 aa).

The protein belongs to the bacterial ribosomal protein bL33 family.

It is found in the plastid. The protein localises to the chloroplast. The chain is Large ribosomal subunit protein bL33c from Agrostis stolonifera (Creeping bentgrass).